Consider the following 335-residue polypeptide: Large ribosomal subunit protein uL3 (335 aa).

A disordered region spans residues 1–20 (MATIHRPRRGSLAFSPRKRA).

This sequence belongs to the universal ribosomal protein uL3 family. In terms of assembly, part of the 50S ribosomal subunit. Forms a cluster with proteins L14 and L24e.

Functionally, one of the primary rRNA binding proteins, it binds directly near the 3'-end of the 23S rRNA, where it nucleates assembly of the 50S subunit. The protein is Large ribosomal subunit protein uL3 of Methanothrix thermoacetophila (strain DSM 6194 / JCM 14653 / NBRC 101360 / PT) (Methanosaeta thermophila).